The chain runs to 484 residues: Sperm motility kinase 1 (484 aa).

The Protein kinase domain maps to 8-256 (YEMLETIGQG…VAEVMVHPWI (249 aa)). Residues 14–22 (IGQGGCAKV) and Lys37 contribute to the ATP site. The active-site Proton acceptor is the Asp127. The region spanning 274 to 314 (KPDPAIVKPMGHIGFQAQDIEDSLRQRKFNETMASYCLLKK) is the UBA domain. The span at 423 to 434 (IDESTEGHTSAS) shows a compositional bias: polar residues. Residues 423–447 (IDESTEGHTSASAEDKPVHSRGWPR) are disordered.

It belongs to the protein kinase superfamily. Tyr protein kinase family. Smok subfamily. Testis-specific. Expressed in the testis from 22 days postpartum (22 dpp).

The enzyme catalyses L-seryl-[protein] + ATP = O-phospho-L-seryl-[protein] + ADP + H(+). The catalysed reaction is L-threonyl-[protein] + ATP = O-phospho-L-threonyl-[protein] + ADP + H(+). Functionally, may play a role in sperm motility, especially in the regulation of flagellar function. The polypeptide is Sperm motility kinase 1 (Smok1) (Mus musculus (Mouse)).